A 486-amino-acid polypeptide reads, in one-letter code: UDP-N-acetylmuramate--L-alanine ligase (486 aa).

Residue 126-132 participates in ATP binding; that stretch reads GTHGKTT.

This sequence belongs to the MurCDEF family.

The protein localises to the cytoplasm. It carries out the reaction UDP-N-acetyl-alpha-D-muramate + L-alanine + ATP = UDP-N-acetyl-alpha-D-muramoyl-L-alanine + ADP + phosphate + H(+). The protein operates within cell wall biogenesis; peptidoglycan biosynthesis. Functionally, cell wall formation. The protein is UDP-N-acetylmuramate--L-alanine ligase of Pectobacterium carotovorum subsp. carotovorum (strain PC1).